Consider the following 464-residue polypeptide: tRNA modification GTPase MnmE (464 aa).

Residues arginine 25, glutamate 87, and lysine 130 each coordinate (6S)-5-formyl-5,6,7,8-tetrahydrofolate. Positions 226–386 (GLSVVLAGQP…LRAELLRIAG (161 aa)) constitute a TrmE-type G domain. Asparagine 236 provides a ligand contact to K(+). GTP contacts are provided by residues 236 to 241 (NVGKSS), 255 to 261 (TPIAGTT), and 280 to 283 (DTAG). Position 240 (serine 240) interacts with Mg(2+). Residues threonine 255, isoleucine 257, and threonine 260 each coordinate K(+). Threonine 261 is a binding site for Mg(2+). Lysine 464 is a (6S)-5-formyl-5,6,7,8-tetrahydrofolate binding site.

Belongs to the TRAFAC class TrmE-Era-EngA-EngB-Septin-like GTPase superfamily. TrmE GTPase family. In terms of assembly, homodimer. Heterotetramer of two MnmE and two MnmG subunits. Requires K(+) as cofactor.

It is found in the cytoplasm. Exhibits a very high intrinsic GTPase hydrolysis rate. Involved in the addition of a carboxymethylaminomethyl (cmnm) group at the wobble position (U34) of certain tRNAs, forming tRNA-cmnm(5)s(2)U34. The protein is tRNA modification GTPase MnmE of Burkholderia ambifaria (strain ATCC BAA-244 / DSM 16087 / CCUG 44356 / LMG 19182 / AMMD) (Burkholderia cepacia (strain AMMD)).